We begin with the raw amino-acid sequence, 290 residues long: 4-hydroxy-tetrahydrodipicolinate synthase (290 aa).

T48 contributes to the pyruvate binding site. Y137 serves as the catalytic Proton donor/acceptor. K165 functions as the Schiff-base intermediate with substrate in the catalytic mechanism. I206 lines the pyruvate pocket.

This sequence belongs to the DapA family. Homotetramer; dimer of dimers.

The protein localises to the cytoplasm. The catalysed reaction is L-aspartate 4-semialdehyde + pyruvate = (2S,4S)-4-hydroxy-2,3,4,5-tetrahydrodipicolinate + H2O + H(+). It functions in the pathway amino-acid biosynthesis; L-lysine biosynthesis via DAP pathway; (S)-tetrahydrodipicolinate from L-aspartate: step 3/4. In terms of biological role, catalyzes the condensation of (S)-aspartate-beta-semialdehyde [(S)-ASA] and pyruvate to 4-hydroxy-tetrahydrodipicolinate (HTPA). This chain is 4-hydroxy-tetrahydrodipicolinate synthase, found in Ligilactobacillus salivarius (strain UCC118) (Lactobacillus salivarius).